We begin with the raw amino-acid sequence, 347 residues long: Probable dual-specificity RNA methyltransferase RlmN (347 aa).

Catalysis depends on Glu-91, which acts as the Proton acceptor. Positions 97 to 327 (YKYGNSICVS…ATVRREMGSD (231 aa)) constitute a Radical SAM core domain. A disulfide bond links Cys-104 and Cys-332. Residues Cys-111, Cys-115, and Cys-118 each coordinate [4Fe-4S] cluster. Residues 158–159 (GE), Ser-190, 213–215 (SLH), and Asn-289 each bind S-adenosyl-L-methionine. Cys-332 functions as the S-methylcysteine intermediate in the catalytic mechanism.

Belongs to the radical SAM superfamily. RlmN family. It depends on [4Fe-4S] cluster as a cofactor.

The protein resides in the cytoplasm. The catalysed reaction is adenosine(2503) in 23S rRNA + 2 reduced [2Fe-2S]-[ferredoxin] + 2 S-adenosyl-L-methionine = 2-methyladenosine(2503) in 23S rRNA + 5'-deoxyadenosine + L-methionine + 2 oxidized [2Fe-2S]-[ferredoxin] + S-adenosyl-L-homocysteine. It carries out the reaction adenosine(37) in tRNA + 2 reduced [2Fe-2S]-[ferredoxin] + 2 S-adenosyl-L-methionine = 2-methyladenosine(37) in tRNA + 5'-deoxyadenosine + L-methionine + 2 oxidized [2Fe-2S]-[ferredoxin] + S-adenosyl-L-homocysteine. In terms of biological role, specifically methylates position 2 of adenine 2503 in 23S rRNA and position 2 of adenine 37 in tRNAs. The protein is Probable dual-specificity RNA methyltransferase RlmN of Clostridium perfringens (strain SM101 / Type A).